Here is a 313-residue protein sequence, read N- to C-terminus: MVSPVVYLVVAALLVGLILFLTRGRGRAAAAAQEPLHNEEVPAAAGRVARPQPLEPEEQRAAGRPRRRRDLGSRLQAQRRAQRVAWADENEEEAIIQAQEEEDIEKPVETHLSGKIGAKKLRKLEEKQARKAQREAEEAEREERKRLESQREAEWKKEEERLRLEEEQKEEEERKAQEEQAQREHEEYLKLKETFVVVEEGVGETMTEEQSHSFLAEFINYIKQSKVVLLEDLASQVGLRTQDTINRIQDLLAEGTLTGVIDDRGKFIYITPEELAAVANFIRQRGRVSITELAQASNSLIAWGRETPAQAPA.

A helical transmembrane segment spans residues 1–28; sequence MVSPVVYLVVAALLVGLILFLTRGRGRA. Residues 1–113 form a mediates interaction with CDK5RAP3 region; the sequence is MVSPVVYLVV…IEKPVETHLS (113 aa). The Cytoplasmic portion of the chain corresponds to 29–313; the sequence is AAAAQEPLHN…GRETPAQAPA (285 aa). Residues 40 to 88 are disordered; the sequence is EVPAAAGRVARPQPLEPEEQRAAGRPRRRRDLGSRLQAQRRAQRVAWAD. 2 positions are modified to phosphoserine: S73 and S113. Positions 73–87 are enriched in low complexity; sequence SRLQAQRRAQRVAWA. Residues 117 to 215 are mediates interaction with TRIP4; it reads GAKKLRKLEE…MTEEQSHSFL (99 aa). The disordered stretch occupies residues 130–185; it reads RKAQREAEEAEREERKRLESQREAEWKKEEERLRLEEEQKEEEERKAQEEQAQREH. Residues 194–208 carry the UFM1-interacting motif (UFIM) motif; that stretch reads TFVVVEEGVGETMTE. Residues 215-313 form a mediates interaction with UFL1 region; that stretch reads LAEFINYIKQ…GRETPAQAPA (99 aa). A PCI domain is found at 228–272; sequence VLLEDLASQVGLRTQDTINRIQDLLAEGTLTGVIDDRGKFIYITP. K266 is covalently cross-linked (Glycyl lysine isopeptide (Lys-Gly) (interchain with G-Cter in UFM1)).

This sequence belongs to the DDRGK1 family. In terms of assembly, component of the UFM1 ribosome E3 ligase (UREL) complex, composed of UFL1, DDRGK1 and CDK5RAP3. Interacts with (unphosphorylated) ERN1/IRE1-alpha; interaction is dependent on UFM1 and takes place in response to endoplasmic reticulum stress, regulating ERN1/IRE1-alpha stability. Interacts with NFKBIA. Interacts with SOX9. Post-translationally, ubiquitinated. Ubiquitination probably triggers proteasomal degradation and is negatively regulated by UFL1, the enzyme involved in the ufmylation of DDRGK1. Ufmylated; conjugated to ubiquitin-like protein UFM1, probably at Lys-266 by UFL1. The relevance of ufmylation is however unclear: as DDRGK1 acts as a substrate adapter for ufmylation, it is uncertain whether ufmylation is a collateral effect of the ufmylation process or whether it is required to regulate its activity.

It is found in the endoplasmic reticulum membrane. Functionally, component of the UFM1 ribosome E3 ligase (UREL) complex, a multiprotein complex that catalyzes ufmylation of endoplasmic reticulum-docked proteins. The UREL complex plays a key role in ribosome recycling by mediating mono-ufmylation of the RPL26/uL24 subunit of the 60S ribosome following ribosome dissociation: ufmylation weakens the junction between post-termination 60S subunits and SEC61 translocons, promoting release and recycling of the large ribosomal subunit from the endoplasmic reticulum membrane. Ufmylation of RPL26/uL24 and subsequent 60S ribosome recycling either take place after normal termination of translation or after ribosome stalling during cotranslational translocation at the endoplasmic reticulum. Within the UREL complex, DDRGK1 tethers the complex to the endoplasmic reticulum membrane to restrict its activity to endoplasmic reticulum-docked ribosomes and acts as an ufmylation 'reader': following RPL26/uL24 ufmylation, DDRGK1 specifically binds to ufmylated RPL26/uL24 via its UFIM motif, resulting in stable association between the 60S ribosome and the UREL complex, followed by dissociation of the 60S ribosome subunit from the endoplasmic reticulum membrane. The UREL complex is also involved in reticulophagy in response to endoplasmic reticulum stress by promoting ufmylation of proteins such as CYB5R3 and RPN1, thereby promoting lysosomal degradation of ufmylated proteins. Ufmylation-dependent reticulophagy inhibits the unfolded protein response (UPR) by regulating ERN1/IRE1-alpha stability. Acts as a regulator of immunity by promoting differentiation of B-cells into plasma cells: acts by promoting expansion of the endoplasmic reticulum and regulating the unfolded protein response (UPR). May also be required for TRIP4 ufmylation. May play a role in NF-kappa-B-mediated transcription through regulation of the phosphorylation and the degradation of NFKBIA, the inhibitor of NF-kappa-B. Plays a role in cartilage development through SOX9, inhibiting the ubiquitin-mediated proteasomal degradation of this transcriptional regulator. Required for stabilization and ufmylation of ATG9A. This Bos taurus (Bovine) protein is DDRGK domain-containing protein 1.